Consider the following 74-residue polypeptide: RNA-binding protein Hfq (74 aa).

Residues 9–69 (DQYLNQLRKN…ISTFSPVKNV (61 aa)) form the Sm domain.

This sequence belongs to the Hfq family. Homohexamer.

In terms of biological role, RNA chaperone that binds small regulatory RNA (sRNAs) and mRNAs to facilitate mRNA translational regulation in response to envelope stress, environmental stress and changes in metabolite concentrations. Also binds with high specificity to tRNAs. In Oceanobacillus iheyensis (strain DSM 14371 / CIP 107618 / JCM 11309 / KCTC 3954 / HTE831), this protein is RNA-binding protein Hfq.